A 210-amino-acid polypeptide reads, in one-letter code: Protein HEADING DATE REPRESSOR 1 (210 aa).

The segment at 1–97 (MEEPASADPP…GKRSSAEMLL (97 aa)) is disordered. Residues 29-49 (QQELNKEAADEQLNNQAHEEA) adopt a coiled-coil conformation. Basic and acidic residues-rich tracts occupy residues 45–54 (AHEEAMKIDD) and 62–79 (DDVH…RKAL). Positions 129–184 (RRIAIQEMNRKDREINGLNEQLEEDSRVLELLQKQLADERKKRTEIEKENSMLHEQ) form a coiled coil.

Interacts with OSK3 and OSK4. In terms of tissue distribution, mostly expressed in leaves, seedlings and floral organs, and, to a lower extent, in panicle, roots, nodes, internodes, leaf joint and sheath.

The protein localises to the nucleus. Functionally, regulates flowering time via a photoperiod-dependent pathway. Suppressor of flowering that upregulates HD1 and down-regulates EHD1 in long days (LD), thus leading to the down-regulation of HD3A and RFT1. Triggers OSK4-mediated HD1 phosphorylation. The sequence is that of Protein HEADING DATE REPRESSOR 1 from Oryza sativa subsp. japonica (Rice).